Here is a 196-residue protein sequence, read N- to C-terminus: CRISPR-associated exonuclease Cas4 (196 aa).

Residue C23 participates in [4Fe-4S] cluster binding. Mn(2+)-binding residues include H50, D90, and E103. [4Fe-4S] cluster-binding residues include C184, C187, and C193.

It belongs to the CRISPR-associated exonuclease Cas4 family. Mg(2+) is required as a cofactor. Requires [4Fe-4S] cluster as cofactor.

The enzyme catalyses exonucleolytic cleavage in the 5'- to 3'-direction to yield nucleoside 3'-phosphates.. CRISPR (clustered regularly interspaced short palindromic repeat) is an adaptive immune system that provides protection against mobile genetic elements (viruses, transposable elements and conjugative plasmids). CRISPR clusters contain sequences complementary to antecedent mobile elements and target invading nucleic acids. CRISPR clusters are transcribed and processed into CRISPR RNA (crRNA). This may be a 5' to 3' ssDNA exonuclease. This Francisella tularensis subsp. novicida (strain U112) protein is CRISPR-associated exonuclease Cas4.